The primary structure comprises 308 residues: Porphobilinogen deaminase (308 aa).

Cys241 is subject to S-(dipyrrolylmethanemethyl)cysteine.

The protein belongs to the HMBS family. Monomer. The cofactor is dipyrromethane.

It catalyses the reaction 4 porphobilinogen + H2O = hydroxymethylbilane + 4 NH4(+). It participates in porphyrin-containing compound metabolism; protoporphyrin-IX biosynthesis; coproporphyrinogen-III from 5-aminolevulinate: step 2/4. Tetrapolymerization of the monopyrrole PBG into the hydroxymethylbilane pre-uroporphyrinogen in several discrete steps. This is Porphobilinogen deaminase from Staphylococcus aureus (strain bovine RF122 / ET3-1).